Consider the following 154-residue polypeptide: 3-hydroxyacyl-[acyl-carrier-protein] dehydratase FabZ (154 aa).

His58 is a catalytic residue.

This sequence belongs to the thioester dehydratase family. FabZ subfamily.

Its subcellular location is the cytoplasm. It catalyses the reaction a (3R)-hydroxyacyl-[ACP] = a (2E)-enoyl-[ACP] + H2O. In terms of biological role, involved in unsaturated fatty acids biosynthesis. Catalyzes the dehydration of short chain beta-hydroxyacyl-ACPs and long chain saturated and unsaturated beta-hydroxyacyl-ACPs. The protein is 3-hydroxyacyl-[acyl-carrier-protein] dehydratase FabZ of Protochlamydia amoebophila (strain UWE25).